The primary structure comprises 329 residues: Biotin synthase (329 aa).

Positions N38–S262 constitute a Radical SAM core domain. C53, C57, and C60 together coordinate [4Fe-4S] cluster. Residues C97, C128, C188, and R260 each coordinate [2Fe-2S] cluster.

Belongs to the radical SAM superfamily. Biotin synthase family. Homodimer. [4Fe-4S] cluster serves as cofactor. It depends on [2Fe-2S] cluster as a cofactor.

The enzyme catalyses (4R,5S)-dethiobiotin + (sulfur carrier)-SH + 2 reduced [2Fe-2S]-[ferredoxin] + 2 S-adenosyl-L-methionine = (sulfur carrier)-H + biotin + 2 5'-deoxyadenosine + 2 L-methionine + 2 oxidized [2Fe-2S]-[ferredoxin]. Its pathway is cofactor biosynthesis; biotin biosynthesis; biotin from 7,8-diaminononanoate: step 2/2. Its function is as follows. Catalyzes the conversion of dethiobiotin (DTB) to biotin by the insertion of a sulfur atom into dethiobiotin via a radical-based mechanism. The polypeptide is Biotin synthase (Acinetobacter baumannii (strain ACICU)).